The following is a 392-amino-acid chain: ERBB-3 BINDING PROTEIN 1 (392 aa).

Necessary for nucleolar localization regions lie at residues 1 to 50 (MSSD…IVDI) and 298 to 392 (HLQP…NAQE). Residues 48-56 (VDICEKGDS) form an RNA-binding region. The segment at 355–372 (GIKKKKGGGKKKKAQKAG) is interaction with RNA. The Nuclear localization signal motif lies at 357–367 (KKKKGGGKKKK). A compositionally biased stretch (basic residues) spans 358 to 369 (KKKGGGKKKKAQ). The segment at 358 to 392 (KKKGGGKKKKAQKAGEKGEASTEAEPMDASSNAQE) is disordered.

The protein belongs to the peptidase M24 family. Component of a ribonucleoprotein complex. Interacts with REIL1 and REIL2. In terms of tissue distribution, strongly expressed in calls, roots and flowers, to a lower extent, in stems and siliques, but hardly detectable in leaves.

It is found in the nucleus. Binds RNA. Associates with 28S, 18S and 5.8S mature rRNAs, several rRNA precursors and probably U3 small nucleolar RNA. May be involved in regulation of intermediate and late steps of rRNA processing. May be involved in ribosome assembly. Required for expression of cell cycle genes such as CYCD3-1, RNR2A and CDKB1-1. Promotes, in a dose- and auxin-dependent manner, organ growth by stimulating both cell proliferation and expansion, via the regulation of RBR1 levels. In Arabidopsis thaliana (Mouse-ear cress), this protein is ERBB-3 BINDING PROTEIN 1.